Here is a 325-residue protein sequence, read N- to C-terminus: tRNA U34 carboxymethyltransferase (325 aa).

Residues Lys-91, Trp-105, Lys-110, Gly-130, 152–154 (DPS), Met-196, Tyr-200, and Arg-315 contribute to the carboxy-S-adenosyl-L-methionine site.

Belongs to the class I-like SAM-binding methyltransferase superfamily. CmoB family. In terms of assembly, homotetramer.

It carries out the reaction carboxy-S-adenosyl-L-methionine + 5-hydroxyuridine(34) in tRNA = 5-carboxymethoxyuridine(34) in tRNA + S-adenosyl-L-homocysteine + H(+). In terms of biological role, catalyzes carboxymethyl transfer from carboxy-S-adenosyl-L-methionine (Cx-SAM) to 5-hydroxyuridine (ho5U) to form 5-carboxymethoxyuridine (cmo5U) at position 34 in tRNAs. In Aeromonas salmonicida (strain A449), this protein is tRNA U34 carboxymethyltransferase.